Consider the following 285-residue polypeptide: Diphthine methyl ester synthase (285 aa).

S-adenosyl-L-methionine is bound by residues L9, D84, G87, 112–113 (SI), L163, V221, and H246.

This sequence belongs to the diphthine synthase family.

It localises to the cytoplasm. It carries out the reaction 2-[(3S)-amino-3-carboxypropyl]-L-histidyl-[translation elongation factor 2] + 4 S-adenosyl-L-methionine = diphthine methyl ester-[translation elongation factor 2] + 4 S-adenosyl-L-homocysteine + 3 H(+). It functions in the pathway protein modification; peptidyl-diphthamide biosynthesis. Its function is as follows. S-adenosyl-L-methionine-dependent methyltransferase that catalyzes four methylations of the modified target histidine residue in translation elongation factor 2 (EF-2), to form an intermediate called diphthine methyl ester. The four successive methylation reactions represent the second step of diphthamide biosynthesis. The sequence is that of Diphthine methyl ester synthase (dph5) from Aspergillus fumigatus (strain ATCC MYA-4609 / CBS 101355 / FGSC A1100 / Af293) (Neosartorya fumigata).